The chain runs to 67 residues: Beta-defensin 1 (67 aa).

Residues 1 to 22 form the signal peptide; the sequence is MRIHYLLFAVLFLFLMPVPGEG. Disulfide bonds link C33–C62, C40–C55, and C45–C63.

Monomer. Homodimer. Highly expressed in tongue, nasopharyngeal mucosa and skin, and to a lower extent in the Eustachian tube, lung and trachea.

The protein localises to the secreted. The protein resides in the membrane. In terms of biological role, has antibacterial activity against Gram-positive bacterium S.pneumoniae Serotype 14. Is also active against Gram-negative bacteria M.catarrhalis 1857, and non-typeable H.influenzae strains 86-028NP and 1128. Has antifungal activity against C.albicans. May have a role in maintaining sterility in the middle ear. May act as a ligand for C-C chemokine receptor CCR6. Positively regulates the sperm motility and bactericidal activity in a CCR6-dependent manner. Binds to CCR6 and triggers Ca2+ mobilization in the sperm which is important for its motility. The protein is Beta-defensin 1 (DEFB1) of Chinchilla lanigera (Long-tailed chinchilla).